A 154-amino-acid chain; its full sequence is Myoglobin (154 aa).

One can recognise a Globin domain in the interval 2 to 148; sequence GLSDGEWQLV…FRKDIAAKYK (147 aa). Serine 4 bears the Phosphoserine mark. A nitrite-binding site is contributed by histidine 65. Residue histidine 65 participates in O2 binding. Threonine 68 bears the Phosphothreonine mark. Residue histidine 94 coordinates heme b.

This sequence belongs to the globin family. Monomeric.

The protein localises to the cytoplasm. It is found in the sarcoplasm. It carries out the reaction Fe(III)-heme b-[protein] + nitric oxide + H2O = Fe(II)-heme b-[protein] + nitrite + 2 H(+). It catalyses the reaction H2O2 + AH2 = A + 2 H2O. In terms of biological role, monomeric heme protein which primary function is to store oxygen and facilitate its diffusion within muscle tissues. Reversibly binds oxygen through a pentacoordinated heme iron and enables its timely and efficient release as needed during periods of heightened demand. Depending on the oxidative conditions of tissues and cells, and in addition to its ability to bind oxygen, it also has a nitrite reductase activity whereby it regulates the production of bioactive nitric oxide. Under stress conditions, like hypoxia and anoxia, it also protects cells against reactive oxygen species thanks to its pseudoperoxidase activity. This Globicephala melas (Long-finned pilot whale) protein is Myoglobin (MB).